Here is a 547-residue protein sequence, read N- to C-terminus: CTP synthase (547 aa).

Positions 1–267 are amidoligase domain; the sequence is MTKFVFVTGG…AQQTLALLNL (267 aa). S13 is a CTP binding site. S13 lines the UTP pocket. ATP-binding positions include 14–19 and D71; that span reads SIGKGI. 2 residues coordinate Mg(2+): D71 and E141. CTP contacts are provided by residues 148 to 150, 188 to 193, and K224; these read DIE and KTKPTQ. UTP-binding positions include 188–193 and K224; that span reads KTKPTQ. One can recognise a Glutamine amidotransferase type-1 domain in the interval 292 to 534; the sequence is EIALVGKYVQ…VKAAVDHYST (243 aa). G354 contributes to the L-glutamine binding site. Residue C381 is the Nucleophile; for glutamine hydrolysis of the active site. Residues 382–385, E405, and R462 contribute to the L-glutamine site; that span reads LGMQ. Residues H507 and E509 contribute to the active site.

It belongs to the CTP synthase family. Homotetramer.

It carries out the reaction UTP + L-glutamine + ATP + H2O = CTP + L-glutamate + ADP + phosphate + 2 H(+). The enzyme catalyses L-glutamine + H2O = L-glutamate + NH4(+). It catalyses the reaction UTP + NH4(+) + ATP = CTP + ADP + phosphate + 2 H(+). The protein operates within pyrimidine metabolism; CTP biosynthesis via de novo pathway; CTP from UDP: step 2/2. Its activity is regulated as follows. Allosterically activated by GTP, when glutamine is the substrate; GTP has no effect on the reaction when ammonia is the substrate. The allosteric effector GTP functions by stabilizing the protein conformation that binds the tetrahedral intermediate(s) formed during glutamine hydrolysis. Inhibited by the product CTP, via allosteric rather than competitive inhibition. Its function is as follows. Catalyzes the ATP-dependent amination of UTP to CTP with either L-glutamine or ammonia as the source of nitrogen. Regulates intracellular CTP levels through interactions with the four ribonucleotide triphosphates. This chain is CTP synthase, found in Rippkaea orientalis (strain PCC 8801 / RF-1) (Cyanothece sp. (strain PCC 8801)).